The chain runs to 331 residues: Barley B recombinant-like protein D (331 aa).

Positions 43–101 (ALMNDRDNAIRERDHALAEKKAAIAERDMAFTQRDAAMAERNAAVVERDNALAALELAR) form a coiled coil. Residues 51-86 (AIRERDHALAEKKAAIAERDMAFTQRDAAMAERNAA) form an alanine-zipper region. The span at 104-122 (GLNMNNGNGFPQGSLSGSK) shows a compositional bias: polar residues. Disordered stretches follow at residues 104–140 (GLNMNNGNGFPQGSLSGSKNIHHHDQLSHAQSSPLQL) and 156–205 (AYPI…VGMS).

Belongs to the BBR/BPC family. Homodimer. Heterodimer.

The protein resides in the nucleus. Functionally, transcriptional regulator that specifically binds to GA-rich elements (GAGA-repeats) present in regulatory sequences of genes involved in developmental processes. In Oryza sativa subsp. japonica (Rice), this protein is Barley B recombinant-like protein D.